The primary structure comprises 525 residues: Coronin-2A (525 aa).

WD repeat units lie at residues 24–71, 72–122, 123–170, 171–214, 215–259, 260–305, and 306–342; these read NCYD…TGKL, DPHY…RNLT, AYRK…SVIT, SPMS…AGTV, LQEA…DNLS, VPLM…ADKP, and HLSYLTEYRSYNPQKGIGVMPKRGLDVSSCEIFRFYK. A coiled-coil region spans residues 485–524; the sequence is QMFYRQQEEIRRLRELLTQREVQAKQLELEIKNLRMGSEQ.

This sequence belongs to the WD repeat coronin family. In terms of assembly, binds actin. Component of the N-Cor repressor complex, at least composed of NCOR1, NCOR2, HDAC3, TBL1X, TBL1R, CORO2A and GPS2.

This chain is Coronin-2A (CORO2A), found in Homo sapiens (Human).